The chain runs to 90 residues: UPF0335 protein RPD_1405 (90 aa).

The protein belongs to the UPF0335 family.

The polypeptide is UPF0335 protein RPD_1405 (Rhodopseudomonas palustris (strain BisB5)).